The following is a 161-amino-acid chain: SsrA-binding protein (161 aa).

It belongs to the SmpB family.

It localises to the cytoplasm. Required for rescue of stalled ribosomes mediated by trans-translation. Binds to transfer-messenger RNA (tmRNA), required for stable association of tmRNA with ribosomes. tmRNA and SmpB together mimic tRNA shape, replacing the anticodon stem-loop with SmpB. tmRNA is encoded by the ssrA gene; the 2 termini fold to resemble tRNA(Ala) and it encodes a 'tag peptide', a short internal open reading frame. During trans-translation Ala-aminoacylated tmRNA acts like a tRNA, entering the A-site of stalled ribosomes, displacing the stalled mRNA. The ribosome then switches to translate the ORF on the tmRNA; the nascent peptide is terminated with the 'tag peptide' encoded by the tmRNA and targeted for degradation. The ribosome is freed to recommence translation, which seems to be the essential function of trans-translation. The polypeptide is SsrA-binding protein (Baumannia cicadellinicola subsp. Homalodisca coagulata).